The chain runs to 456 residues: tRNA modification GTPase MnmE (456 aa).

The (6S)-5-formyl-5,6,7,8-tetrahydrofolate site is built by arginine 24, glutamate 81, and lysine 120. The TrmE-type G domain occupies 216-379 (GMTVVIAGRP…LRDHLKACMG (164 aa)). Asparagine 226 lines the K(+) pocket. GTP is bound by residues 226–231 (NAGKSS), 245–251 (TAIAGTT), 270–273 (DTAG), and 335–338 (NKAD). Serine 230 is a Mg(2+) binding site. 3 residues coordinate K(+): threonine 245, isoleucine 247, and threonine 250. Threonine 251 provides a ligand contact to Mg(2+). Lysine 456 provides a ligand contact to (6S)-5-formyl-5,6,7,8-tetrahydrofolate.

This sequence belongs to the TRAFAC class TrmE-Era-EngA-EngB-Septin-like GTPase superfamily. TrmE GTPase family. As to quaternary structure, homodimer. Heterotetramer of two MnmE and two MnmG subunits. K(+) is required as a cofactor.

The protein localises to the cytoplasm. Its function is as follows. Exhibits a very high intrinsic GTPase hydrolysis rate. Involved in the addition of a carboxymethylaminomethyl (cmnm) group at the wobble position (U34) of certain tRNAs, forming tRNA-cmnm(5)s(2)U34. In Pseudomonas putida (strain W619), this protein is tRNA modification GTPase MnmE.